A 191-amino-acid chain; its full sequence is Flavin prenyltransferase UbiX (191 aa).

Residues 13–15, Thr39, 90–93, and Arg125 each bind FMN; these read GAS and TMKT. Residues Tyr155 and Lys171 each contribute to the dimethylallyl phosphate site.

It belongs to the UbiX/PAD1 family.

The catalysed reaction is dimethylallyl phosphate + FMNH2 = prenylated FMNH2 + phosphate. Flavin prenyltransferase that catalyzes the synthesis of the prenylated FMN cofactor (prenyl-FMN) for 4-hydroxy-3-polyprenylbenzoic acid decarboxylase UbiD. The prenyltransferase is metal-independent and links a dimethylallyl moiety from dimethylallyl monophosphate (DMAP) to the flavin N5 and C6 atoms of FMN. In Methanothermobacter thermautotrophicus (strain ATCC 29096 / DSM 1053 / JCM 10044 / NBRC 100330 / Delta H) (Methanobacterium thermoautotrophicum), this protein is Flavin prenyltransferase UbiX.